The chain runs to 360 residues: uncharacterized protein (360 aa).

Positions 4 to 235 (LSLQHIQKIY…PANMFVAGFI (232 aa)) constitute an ABC transporter domain. Residue 37–44 (GPSGCGKS) coordinates ATP.

This sequence belongs to the ABC transporter superfamily.

This is an uncharacterized protein from Escherichia coli O6:H1 (strain CFT073 / ATCC 700928 / UPEC).